A 258-amino-acid polypeptide reads, in one-letter code: MKGPLKIGLMDSGMGGLSVLKGILKYDAELEVVYYGDLKNSPYGEKETSEILELVRDVCKRLQEENVSAILLACNTATSAAAQTLRKEFSIPIFGMEPAIKPAILQNPGKKIALLATPVTQREKKLQRLKAELGAEELILPVSCPGLAGLVDKGEFDEAEKYLRPILKKLREENVENLVLGCTHYIFLKHIILKNFPNVRIYDGNSGTIKHLLNSLQVRQRVSNRSSVSGSVYKLILNSDEELHFRLATELLQFENKF.

Residues 11 to 12 (DS) and 43 to 44 (YG) each bind substrate. The Proton donor/acceptor role is filled by C74. A substrate-binding site is contributed by 75-76 (NT). The Proton donor/acceptor role is filled by C182. 183 to 184 (TH) contributes to the substrate binding site.

It belongs to the aspartate/glutamate racemases family.

It carries out the reaction L-glutamate = D-glutamate. The protein operates within cell wall biogenesis; peptidoglycan biosynthesis. Its function is as follows. Provides the (R)-glutamate required for cell wall biosynthesis. The protein is Glutamate racemase of Leptospira borgpetersenii serovar Hardjo-bovis (strain JB197).